The chain runs to 338 residues: 1-aminocyclopropane-1-carboxylate deaminase (338 aa).

Lys-51 is modified (N6-(pyridoxal phosphate)lysine). Residue Ser-78 is the Nucleophile of the active site.

Belongs to the ACC deaminase/D-cysteine desulfhydrase family. Homotrimer. Requires pyridoxal 5'-phosphate as cofactor.

The enzyme catalyses 1-aminocyclopropane-1-carboxylate + H2O = 2-oxobutanoate + NH4(+). Its function is as follows. Catalyzes a cyclopropane ring-opening reaction, the irreversible conversion of 1-aminocyclopropane-1-carboxylate (ACC) to ammonia and alpha-ketobutyrate. Allows growth on ACC as a nitrogen source. This is 1-aminocyclopropane-1-carboxylate deaminase from Burkholderia lata (strain ATCC 17760 / DSM 23089 / LMG 22485 / NCIMB 9086 / R18194 / 383).